The sequence spans 454 residues: Chromosomal replication initiator protein DnaA (454 aa).

The domain I, interacts with DnaA modulators stretch occupies residues 1–77; the sequence is MASLNENQKF…GFEVFGRMID (77 aa). Residues 77-115 are domain II; the sequence is DYELYANDELTDIELRRLNNQSPVDEPLSVAKPTSPLVS. A domain III, AAA+ region region spans residues 116 to 332; it reads GLNEKYNFEN…GALNRVEFVA (217 aa). Residues Gly-160, Gly-162, Lys-163, and Thr-164 each contribute to the ATP site. The segment at 333–454 is domain IV, binds dsDNA; that stretch reads RANGISIVDI…KDIDSIKRKF (122 aa).

The protein belongs to the DnaA family. Oligomerizes as a right-handed, spiral filament on DNA at oriC.

It is found in the cytoplasm. Functionally, plays an essential role in the initiation and regulation of chromosomal replication. ATP-DnaA binds to the origin of replication (oriC) to initiate formation of the DNA replication initiation complex once per cell cycle. Binds the DnaA box (a 9 base pair repeat at the origin) and separates the double-stranded (ds)DNA. Forms a right-handed helical filament on oriC DNA; dsDNA binds to the exterior of the filament while single-stranded (ss)DNA is stabiized in the filament's interior. The ATP-DnaA-oriC complex binds and stabilizes one strand of the AT-rich DNA unwinding element (DUE), permitting loading of DNA polymerase. After initiation quickly degrades to an ADP-DnaA complex that is not apt for DNA replication. Binds acidic phospholipids. In Lactococcus lactis subsp. cremoris (strain MG1363), this protein is Chromosomal replication initiator protein DnaA.